Here is a 168-residue protein sequence, read N- to C-terminus: Ubiquitin-fold modifier-conjugating enzyme 1 (168 aa).

Catalysis depends on cysteine 116, which acts as the Glycyl thioester intermediate.

The protein belongs to the ubiquitin-conjugating enzyme family. UFC1 subfamily.

Functionally, E2-like enzyme which forms an intermediate with UFM1 via a thioester linkage. The protein is Ubiquitin-fold modifier-conjugating enzyme 1 of Trichoplax adhaerens (Trichoplax reptans).